A 185-amino-acid polypeptide reads, in one-letter code: Ribosome-recycling factor (185 aa).

Residues 135 to 159 form a disordered region; the sequence is ANDEVKKLEKDKAITEDESKKGQDE.

The protein belongs to the RRF family.

It localises to the cytoplasm. Responsible for the release of ribosomes from messenger RNA at the termination of protein biosynthesis. May increase the efficiency of translation by recycling ribosomes from one round of translation to another. The polypeptide is Ribosome-recycling factor (Campylobacter curvus (strain 525.92)).